A 367-amino-acid polypeptide reads, in one-letter code: Uptake hydrogenase small subunit (367 aa).

The tat-type signal signal peptide spans 1 to 45 (MTPTETFYEVMRRQGVTRRSFLKFCSLTATALGLGPAYTSEIAHA). The [4Fe-4S] cluster site is built by C62, C65, C160, C194, H232, C235, C260, and C266. Residues C275, C294, and C297 each contribute to the [3Fe-4S] cluster site.

The protein belongs to the [NiFe]/[NiFeSe] hydrogenase small subunit family. In terms of assembly, heterodimer of a large and a small subunit. Requires [4Fe-4S] cluster as cofactor. The cofactor is [3Fe-4S] cluster. In terms of processing, predicted to be exported by the Tat system. The position of the signal peptide cleavage has been experimentally proven.

It localises to the cell membrane. The enzyme catalyses H2 + A = AH2. In terms of biological role, this enzyme recycles the H(2) produced by nitrogenase to increase the production of ATP and to protect nitrogenase against inhibition or damage by O(2) under carbon- or phosphate-limited conditions. In Afipia carboxidovorans (strain ATCC 49405 / DSM 1227 / KCTC 32145 / OM5) (Oligotropha carboxidovorans), this protein is Uptake hydrogenase small subunit (hoxS).